Here is a 416-residue protein sequence, read N- to C-terminus: NADH-quinone oxidoreductase subunit H (416 aa).

9 consecutive transmembrane segments (helical) span residues 16-36, 84-104, 124-144, 165-185, 197-217, 260-280, 288-308, 320-340, and 353-373; these read LILA…LAAI, PVYL…FAVI, LAVA…GIVL, VVSY…YAGT, STWY…SMVG, VSAL…PISL, WWPL…YIWL, FMAI…MIVA, and WASG…VILW.

This sequence belongs to the complex I subunit 1 family. In terms of assembly, NDH-1 is composed of 14 different subunits. Subunits NuoA, H, J, K, L, M, N constitute the membrane sector of the complex.

The protein resides in the cell membrane. It carries out the reaction a quinone + NADH + 5 H(+)(in) = a quinol + NAD(+) + 4 H(+)(out). Its function is as follows. NDH-1 shuttles electrons from NADH, via FMN and iron-sulfur (Fe-S) centers, to quinones in the respiratory chain. The immediate electron acceptor for the enzyme in this species is believed to be menaquinone. Couples the redox reaction to proton translocation (for every two electrons transferred, four hydrogen ions are translocated across the cytoplasmic membrane), and thus conserves the redox energy in a proton gradient. This subunit may bind ubiquinone. The chain is NADH-quinone oxidoreductase subunit H from Mycobacterium sp. (strain KMS).